Reading from the N-terminus, the 396-residue chain is 1-deoxy-D-xylulose 5-phosphate reductoisomerase (396 aa).

NADPH-binding residues include Thr-17, Gly-18, Ser-19, Ile-20, Asn-47, and Asn-130. Lys-131 is a 1-deoxy-D-xylulose 5-phosphate binding site. Glu-132 is an NADPH binding site. Asp-156 serves as a coordination point for Mn(2+). 1-deoxy-D-xylulose 5-phosphate is bound by residues Ser-157, Glu-158, Ser-182, and His-205. Residue Glu-158 participates in Mn(2+) binding. Gly-211 serves as a coordination point for NADPH. 1-deoxy-D-xylulose 5-phosphate-binding residues include Ser-218, Asn-223, Lys-224, and Glu-227. Mn(2+) is bound at residue Glu-227.

Belongs to the DXR family. Mg(2+) is required as a cofactor. Requires Mn(2+) as cofactor.

It carries out the reaction 2-C-methyl-D-erythritol 4-phosphate + NADP(+) = 1-deoxy-D-xylulose 5-phosphate + NADPH + H(+). Its pathway is isoprenoid biosynthesis; isopentenyl diphosphate biosynthesis via DXP pathway; isopentenyl diphosphate from 1-deoxy-D-xylulose 5-phosphate: step 1/6. In terms of biological role, catalyzes the NADPH-dependent rearrangement and reduction of 1-deoxy-D-xylulose-5-phosphate (DXP) to 2-C-methyl-D-erythritol 4-phosphate (MEP). In Rhizobium johnstonii (strain DSM 114642 / LMG 32736 / 3841) (Rhizobium leguminosarum bv. viciae), this protein is 1-deoxy-D-xylulose 5-phosphate reductoisomerase.